The primary structure comprises 475 residues: MTAVKTQHSLAGQVYAVPLIQPDLRREEAIQQVADALQYLQNISGDIFSRISQRVELSRRQLQAIGERVSLAQAKIEKIKGSKKAIKVFSSAKYPAPEHLQEYNSVFTGALDPGLQRRPRYRIQSKHRPLDERALQEKLKYFPVCVSTKSEPEDEAEEGLGGLPSNISSISSLLLFNTTENLYKKYVFLDPLAGAVTKTHTMLGTEEEKLFDAPLSISKREQLEQPAPENYFYVPGLGQVPEIDVPSYLPDLPGVADDLMYSADLGPGIAPSAPGAIPELPAFHTEVAEPFQPEREDGALLAPPPPPPPPPPPPPPAPTAVVSAPQPPMSPDVVTVTGKVAREEDSGSGEAHSASVQGAPKEVVDPSSGRATLLESIRQAGGIGKAKLRSVKERKLEKKKQKEQEQVRATSQGGDLMSDLFNKLVMRRKGISGKGPGTGTSEGPGGAFSRMSDSIPPLPPPQQPAGDEDEDDWES.

The tract at residues 1-54 (MTAVKTQHSLAGQVYAVPLIQPDLRREEAIQQVADALQYLQNISGDIFSRISQR) is required for WASH complex assembly. The interval 1 to 167 (MTAVKTQHSL…EGLGGLPSNI (167 aa)) is WHD1. Lysine 219 participates in a covalent cross-link: Glycyl lysine isopeptide (Lys-Gly) (interchain with G-Cter in ubiquitin). The interval 296–475 (EDGALLAPPP…GDEDEDDWES (180 aa)) is disordered. The span at 302 to 318 (APPPPPPPPPPPPPPAP) shows a compositional bias: pro residues. Residues 357 to 475 (QGAPKEVVDP…GDEDEDDWES (119 aa)) form a VCA region. One can recognise a WH2 domain in the interval 369 to 391 (GRATLLESIRQAGGIGKAKLRSV). Basic and acidic residues predominate over residues 390-406 (SVKERKLEKKKQKEQEQ). Gly residues predominate over residues 432–446 (SGKGPGTGTSEGPGG). The span at 466-475 (GDEDEDDWES) shows a compositional bias: acidic residues.

It belongs to the WASH1 family. As to quaternary structure, component of the WASH core complex also described as WASH regulatory complex SHRC composed of WASHC1, WASHC2, WASHC3, WASHC4 and WASHC5. The WASH core complex associates with the F-actin-capping protein dimer (formed by CAPZA1, CAPZA2 or CAPZA3 and CAPZB) in a transient or substoichiometric manner which was initially described as WASH complex. Interacts (via WHD1 region) with WASHC2; the interaction is direct. Interacts with BECN1; WASHC1 and AMBRA1 can competitively interact with BECN1. Interacts with BLOC1S2; may associate with the BLOC-1 complex. Interacts with tubulin gamma chain (TUBG1 or TUBG2). Interacts with TBC1D23. Ubiquitinated at Lys-219 via 'Lys-63'-linked ubiquitin chains by the TRIM27:MAGEL2 E3 ubiquitin ligase complex, leading to promote endosomal F-actin assembly.

Its subcellular location is the early endosome membrane. It localises to the recycling endosome membrane. Acts as a component of the WASH core complex that functions as a nucleation-promoting factor (NPF) at the surface of endosomes, where it recruits and activates the Arp2/3 complex to induce actin polymerization, playing a key role in the fission of tubules that serve as transport intermediates during endosome sorting. Regulates the trafficking of endosomal alpha5beta1 integrin to the plasma membrane and involved in invasive cell migration. In T-cells involved in endosome-to-membrane recycling of receptors including T-cell receptor (TCR), CD28 and ITGAL; proposed to be implicated in T-cell proliferation and effector function. In dendritic cells involved in endosome-to-membrane recycling of major histocompatibility complex (MHC) class II probably involving retromer and subsequently allowing antigen sampling, loading and presentation during T-cell activation. Involved in cytokinesis and following polar body extrusion during oocyte meiotic maturation. Involved in Arp2/3 complex-dependent actin assembly driving Salmonella typhimurium invasion independent of ruffling. Involved in the exocytosis of MMP14 leading to matrix remodeling during invasive migration and implicating late endosome-to-plasma membrane tubular connections and cooperation with the exocyst complex. Involved in negative regulation of autophagy independently from its role in endosomal sorting by inhibiting BECN1 ubiquitination to inactivate PIK3C3/Vps34 activity. The chain is WASH complex subunit 1 from Rattus norvegicus (Rat).